The primary structure comprises 345 residues: Transcription factor 19 (345 aa).

An FHA domain is found at 31–88; that stretch reads YRLGHRADLCDVALRPQQEPGLISGIHAELHAEPRGDDWRVSLEDHSLQGTLVNNVRL. 2 disordered regions span residues 138–167 and 190–277; these read RSRG…STLS and LTFS…KYPV. The PHD-type zinc-finger motif lies at 293 to 342; it reads AAPCCCLPQEETVAWVQCDGCDVWFHVACVGCSIQAAREADFRCPGCRAG. Zn(2+)-binding residues include Cys-296, Cys-298, Cys-310, Cys-313, His-318, Cys-321, Cys-336, and Cys-339.

The protein localises to the nucleus. Functionally, potential transcription factor that may play a role in the regulation of genes involved in cell cycle G1/S transition. May bind to regulatory elements of genes, including the promoter of the transcription factor FOXO1. The protein is Transcription factor 19 (TCF19) of Macaca mulatta (Rhesus macaque).